Reading from the N-terminus, the 60-residue chain is Myrmicitoxin(1)-Pr4a (60 aa).

Positions 1 to 23 (MKAIIFLFAVLTVVAIIIPIISG) are cleaved as a signal peptide. Positions 24–33 (EPNAGPHAAS) are excised as a propeptide. Q59 bears the Glutamine amide mark.

Belongs to the formicidae venom clade 2 family. Expressed by the venom gland.

It localises to the secreted. Its function is as follows. Toxin that causes a rapid and irreversible paralysis when intrathoracically injected into insects (blowflies). Does not cause spontaneous nocifensive behaviors by intraplantar injection in mice. The sequence is that of Myrmicitoxin(1)-Pr4a from Pogonomyrmex rugosus (Desert harvester ant).